Consider the following 366-residue polypeptide: MDPRGPVPQPFQQLQKPGRIRRRKTRRERNKALVSSHRPLARQDPPISSRDPCVILQDPVASAAPKLVVITQGRLSREHRGLFNHEVKSLDVARLLNRGALESHTPQLPTKPSCSPVGVQEPDLQSKGKENKVPGGSGPGPPNSPDLPVLGQLLEELQYQLIVPQAFPRRNLVQESRDTIIRTLQGCHGCVPDLALVLRGCQLPLPEAKPRVPERQRMASSCMEVPEHAPREGKQRTQQATKGCDFAIPHTCNSTTPAHRGSQVQPPGHQLPFLSSASSPSGAAWGPPTAFDMLKSIWLIATPPPPPPQPWDVRPPQPLPQPPSPLLPRTSALDWSPNPPAPLPSLSWVVTQSSPEAWSFPPMRLY.

Disordered regions lie at residues 1 to 53, 102 to 149, 256 to 286, and 301 to 338; these read MDPR…RDPC, ESHT…DLPV, TPAH…AAWG, and ATPP…WSPN. Residues 18–29 are compositionally biased toward basic residues; the sequence is GRIRRRKTRRER. Composition is skewed to polar residues over residues 104 to 113 and 256 to 265; these read HTPQLPTKPS and TPAHRGSQVQ. Low complexity predominate over residues 275-286; the sequence is SSASSPSGAAWG. The span at 302–326 shows a compositional bias: pro residues; it reads TPPPPPPQPWDVRPPQPLPQPPSPL.

Interacts with CNTD1. As to expression, preferentially expressed in gonads.

It localises to the nucleus. The protein resides in the chromosome. Functionally, promotes meiotic crossing over formation through its interaction with CNTD1 by participating in the crossover differentiation step of crossover-specific recombination intermediates. The chain is Proline-rich protein 19 from Mus musculus (Mouse).